A 1134-amino-acid polypeptide reads, in one-letter code: Myosin-4 (1134 aa).

The 51-residue stretch at 110–160 (REKLCVWCRVAANGQWHLGKIHSTSSSDDVCVMLSANDDVRTMEEIFPANP) folds into the Myosin N-terminal SH3-like domain. In terms of domain architecture, Myosin motor spans 164-830 (EGVEDLTQLS…VISVLEERKK (667 aa)). ATP is bound by residues 255–262 (GESGAGKT) and 304–312 (NDNSSRFGK). 2 actin-binding regions span residues 589–623 (LIEKKPIGLVSLLNEESNFPKATDTTFANKLKQHL) and 710–732 (LFKLMNKLEDTTPHFIRCIKPNS). 3 IQ domains span residues 832 to 861 (VLRGILGLQKQFRGYQTREYFHNMRNAAVI), 855 to 884 (MRNAAVILQSYIRGENARRNYIVVGESAIV), and 891 to 920 (ELDAAIHLQYMVRKWLARKLLNSTQQKNKP). Residues 913 to 939 (STQQKNKPRNEKKKTRRKSTKRVSEDK) form a disordered region. Residues 918-933 (NKPRNEKKKTRRKSTK) are compositionally biased toward basic residues. Positions 953-999 (LADLQSRVLKVEAAIMQKEDENTALQEELQRFEERWLENETRMKSME) form a coiled coil.

The protein belongs to the TRAFAC class myosin-kinesin ATPase superfamily. Myosin family. Plant myosin class VIII subfamily. Homodimer.

In terms of biological role, myosin heavy chain that is required for the cell cycle-regulated transport of various organelles and proteins for their segregation. Functions by binding with its tail domain to receptor proteins on organelles and exerting force with its N-terminal motor domain against actin filaments, thereby transporting its cargo along polarized actin cables. The chain is Myosin-4 (VIII-B) from Arabidopsis thaliana (Mouse-ear cress).